Reading from the N-terminus, the 507-residue chain is 3-octaprenyl-4-hydroxybenzoate carboxy-lyase (507 aa).

Position 177 (Asn-177) interacts with Mn(2+). Residues 180–182 (IYR), 194–196 (RWL), and 199–200 (RG) contribute to the prenylated FMN site. Glu-243 is a binding site for Mn(2+). Asp-302 functions as the Proton donor in the catalytic mechanism.

This sequence belongs to the UbiD family. Homohexamer. It depends on prenylated FMN as a cofactor. Mn(2+) is required as a cofactor.

The protein resides in the cell membrane. It catalyses the reaction a 4-hydroxy-3-(all-trans-polyprenyl)benzoate + H(+) = a 2-(all-trans-polyprenyl)phenol + CO2. It functions in the pathway cofactor biosynthesis; ubiquinone biosynthesis. Its function is as follows. Catalyzes the decarboxylation of 3-octaprenyl-4-hydroxy benzoate to 2-octaprenylphenol, an intermediate step in ubiquinone biosynthesis. The chain is 3-octaprenyl-4-hydroxybenzoate carboxy-lyase from Cupriavidus metallidurans (strain ATCC 43123 / DSM 2839 / NBRC 102507 / CH34) (Ralstonia metallidurans).